The primary structure comprises 59 residues: Large ribosomal subunit protein bL32 (59 aa).

A compositionally biased stretch (basic residues) spans 1–16; the sequence is MAVPKRKTSPSKRGMR. A disordered region spans residues 1–20; that stretch reads MAVPKRKTSPSKRGMRRSHD.

It belongs to the bacterial ribosomal protein bL32 family.

This is Large ribosomal subunit protein bL32 from Sphingopyxis alaskensis (strain DSM 13593 / LMG 18877 / RB2256) (Sphingomonas alaskensis).